The primary structure comprises 318 residues: MKQLMMSDVTPEEIFNQRRQIIKSMGLGIATLGLPNIAFAEENVSELKALTFKAASKSDLALTPENKIIGYNNFYEFGTDKAAPAKFAKDFKTDPWQLEISGEVENPFVLNHQQLFNTFPLEERIYRFRCVEAWSMVVPWIGFELARLVEMAKPSSKAKYVVFHTLYDPEQMPGQKNPLFGGSIDYPYVEALTIEEAMNSLTLLSVGLYGKMLPPQNGAPIRLVMPWKYGFKSIKSIVKISFSETRPKTTWESLAPTEYGFYANVNPNVDHPRWSQGSERVIGAGGLLSVKRQPTLMFNGYEDQVAHLYKDLDLKVNF.

The segment at residues 1 to 40 (MKQLMMSDVTPEEIFNQRRQIIKSMGLGIATLGLPNIAFA) is a signal peptide (tat-type signal). Residues Asn72, 75 to 76 (YE), Cys130, Thr165, Asn217, Arg222, and 233 to 235 (SIK) contribute to the Mo-molybdopterin site.

It belongs to the MsrP family. As to quaternary structure, heterodimer of a catalytic subunit (MsrP) and a heme-binding subunit (MsrQ). Mo-molybdopterin serves as cofactor. Predicted to be exported by the Tat system. The position of the signal peptide cleavage has not been experimentally proven.

Its subcellular location is the periplasm. The catalysed reaction is L-methionyl-[protein] + a quinone + H2O = L-methionyl-(S)-S-oxide-[protein] + a quinol. It carries out the reaction L-methionyl-[protein] + a quinone + H2O = L-methionyl-(R)-S-oxide-[protein] + a quinol. In terms of biological role, part of the MsrPQ system that repairs oxidized periplasmic proteins containing methionine sulfoxide residues (Met-O), using respiratory chain electrons. Thus protects these proteins from oxidative-stress damage caused by reactive species of oxygen and chlorine generated by the host defense mechanisms. MsrPQ is essential for the maintenance of envelope integrity under bleach stress, rescuing a wide series of structurally unrelated periplasmic proteins from methionine oxidation. The catalytic subunit MsrP is non-stereospecific, being able to reduce both (R-) and (S-) diastereoisomers of methionine sulfoxide. This chain is Protein-methionine-sulfoxide reductase catalytic subunit MsrP, found in Haemophilus ducreyi (strain 35000HP / ATCC 700724).